A 220-amino-acid polypeptide reads, in one-letter code: Adenylate kinase (220 aa).

An ATP-binding site is contributed by 12–17 (GAGKGT). The segment at 32–62 (STGDIFRDIVKKENDELGKKIKEIMERGELV) is NMP. AMP-binding positions include T33, R38, 60–62 (ELV), 88–91 (GYPR), and Q95. The segment at 129–166 (ARRICPKCGRIYNLISLPPKEDELCDDCKVKLVQREDD) is LID. R130 contributes to the ATP binding site. C133 and C136 together coordinate Zn(2+). 139–140 (IY) is an ATP binding site. Residues C153 and C156 each contribute to the Zn(2+) site. AMP-binding residues include R163 and R174. I202 provides a ligand contact to ATP.

Belongs to the adenylate kinase family. Monomer.

It localises to the cytoplasm. It catalyses the reaction AMP + ATP = 2 ADP. It functions in the pathway purine metabolism; AMP biosynthesis via salvage pathway; AMP from ADP: step 1/1. Functionally, catalyzes the reversible transfer of the terminal phosphate group between ATP and AMP. Plays an important role in cellular energy homeostasis and in adenine nucleotide metabolism. This chain is Adenylate kinase, found in Thermotoga petrophila (strain ATCC BAA-488 / DSM 13995 / JCM 10881 / RKU-1).